The following is an 879-amino-acid chain: MEPPAIPHITEGFYPLPEIVETFSHHVLQELVSLAEVLPSMSNVEKKKKILDWLLRSRAFTMRLLVLARWVHLSPSVHRCIDVVAFLQGQKFCFQNLVHVLQDIRYQLSFARLRNSDLVTALDILSTGTSLRLANAPTSKLYMLSESPLSTKQILQTLHALNMLIRIRLSLYEIIPTPFQHFTIANGRCTFTVPNEFSVSLTTNSQDPKSTGISFQWIVVDFQFHLPDFSSTPAKYRVFIELHLNEEIAAAFVLQKPILPLIYNILHKFCLYQRLNLLSQQTFQLSRESWLGHLRGVYDEKPPRLRLYYWPQLNVKKEGKPGKIGHYIHIFVNTQPISAFERTLSSKRSSCEYDHFLLLVEWHHDGIVEHVPLDDHMDAQHLLLLITQKHAQLILEQIRKELHPNIFSEHVGGGLKIHVFDNEIIVKVNSVTGRLVLSSSASPLSPPRHLRAAEKNIALNTQPPAQILNRLYFFCIQTQLLEVAQCAELHAVQGYYSFPYLTFSKGKWRKDGDSLWVLAYNVESNSWSVRLLNAAGQTLYTQDVHTTKGTLSIESFSRLSYLLEVQILLFNVQTACQARGMPFEYLPIPPKALIEDDFTTYVQTGCLCIMMPSSNEDMLPVVFVRAHDGQLIFDSRIKGKLPYQSETETEKNCYIDWRTGRITIRVQNFSSFEKTWIGLLKLVALSKTSAFNVDCITLKHVDFTYLDDEKFRATIHDDNTFTLHFFNRHSPFHLISQFLQDTFSDGPSAIQPLRVIMDRTRGVLVAQELGYVVLARSLRQYRIILSKNHGIQVLLNRHGCILQDLSYLSADSRYLEGTQTLTSQWEPCSWLNTVWEGDLGDDELNGQIEAAPEMHLIKMNKTADLTAILKRILAISRKK.

It belongs to the Mediator complex subunit 14 family. As to quaternary structure, component of the Mediator complex.

The protein localises to the nucleus. Functionally, component of the Mediator complex, a coactivator involved in the regulated transcription of nearly all RNA polymerase II-dependent genes. Mediator functions as a bridge to convey information from gene-specific regulatory proteins to the basal RNA polymerase II transcription machinery. Mediator is recruited to promoters by direct interactions with regulatory proteins and serves as a scaffold for the assembly of a functional preinitiation complex with RNA polymerase II and the general transcription factors. The chain is Mediator of RNA polymerase II transcription subunit 14 (med14) from Schizosaccharomyces pombe (strain 972 / ATCC 24843) (Fission yeast).